Reading from the N-terminus, the 126-residue chain is Holo-[acyl-carrier-protein] synthase (126 aa).

Mg(2+) is bound by residues D9 and E58.

Belongs to the P-Pant transferase superfamily. AcpS family. Mg(2+) serves as cofactor.

Its subcellular location is the cytoplasm. It carries out the reaction apo-[ACP] + CoA = holo-[ACP] + adenosine 3',5'-bisphosphate + H(+). In terms of biological role, transfers the 4'-phosphopantetheine moiety from coenzyme A to a Ser of acyl-carrier-protein. This chain is Holo-[acyl-carrier-protein] synthase, found in Photorhabdus laumondii subsp. laumondii (strain DSM 15139 / CIP 105565 / TT01) (Photorhabdus luminescens subsp. laumondii).